A 518-amino-acid chain; its full sequence is Subtilisin-like protease 1 (518 aa).

An N-terminal signal peptide occupies residues 1-19 (MGVFRFISISLAAVSAANA). Positions 20–116 (AQILSMPHAQ…VEPDTIISVH (97 aa)) are excised as a propeptide. Residues 34–115 (SYIVMMKDDT…FVEPDTIISV (82 aa)) form the Inhibitor I9 domain. Residues 126 to 400 (SWGLARISNP…NVLINNGGAK (275 aa)) form the Peptidase S8 domain. Residues D158 and H190 each act as charge relay system in the active site. The tract at residues 175 to 198 (GSNQVNDGDDRDGSGHGTHTSGTM) is disordered. Residues N233 and N251 are each glycosylated (N-linked (GlcNAc...) asparagine). Residues 282-294 (NDNQDAQSSSPAS) show a composition bias toward polar residues. The tract at residues 282–312 (NDNQDAQSSSPASEPSVCTVGSSAEDDSRSS) is disordered. The active-site Charge relay system is S345. Over residues 378-394 (TSSITDAGPGTPTNVLI) the composition is skewed to polar residues. Residues 378–496 (TSSITDAGPG…PYPGGDNFDF (119 aa)) form a disordered region. Composition is skewed to pro residues over residues 405–470 (NPNP…PGEP) and 478–487 (APAPQHPHTP).

This sequence belongs to the peptidase S8 family.

It is found in the secreted. Its function is as follows. Secreted subtilisin-like serine protease with keratinolytic activity that contributes to pathogenicity. This Trichophyton verrucosum (strain HKI 0517) protein is Subtilisin-like protease 1 (SUB1).